The following is a 447-amino-acid chain: GTPase Der (447 aa).

2 consecutive EngA-type G domains span residues 4 to 165 and 180 to 357; these read KIIT…PEEE and LQIV…KIWN. GTP-binding positions include 10-17, 57-61, 119-122, 186-193, 233-237, and 298-301; these read GRPNVGKS, DTPGL, NKCE, GRPNAGKS, DTAGL, and NKWD. Residues 358 to 443 enclose the KH-like domain; sequence KKITTSKLNE…PIRFTYVKTK (86 aa).

This sequence belongs to the TRAFAC class TrmE-Era-EngA-EngB-Septin-like GTPase superfamily. EngA (Der) GTPase family. Associates with the 50S ribosomal subunit.

Its function is as follows. GTPase that plays an essential role in the late steps of ribosome biogenesis. This chain is GTPase Der, found in Rickettsia felis (strain ATCC VR-1525 / URRWXCal2) (Rickettsia azadi).